Reading from the N-terminus, the 248-residue chain is Carboxy-S-adenosyl-L-methionine synthase (248 aa).

Residues Y40, 65–67 (GCS), 95–96 (DN), 123–124 (DI), N138, and R205 contribute to the S-adenosyl-L-methionine site.

The protein belongs to the class I-like SAM-binding methyltransferase superfamily. Cx-SAM synthase family. Homodimer.

The enzyme catalyses prephenate + S-adenosyl-L-methionine = carboxy-S-adenosyl-L-methionine + 3-phenylpyruvate + H2O. Its function is as follows. Catalyzes the conversion of S-adenosyl-L-methionine (SAM) to carboxy-S-adenosyl-L-methionine (Cx-SAM). This Hahella chejuensis (strain KCTC 2396) protein is Carboxy-S-adenosyl-L-methionine synthase.